The primary structure comprises 88 residues: UPF0297 protein EAT1b_2723 (88 aa).

This sequence belongs to the UPF0297 family.

This is UPF0297 protein EAT1b_2723 from Exiguobacterium sp. (strain ATCC BAA-1283 / AT1b).